Here is a 418-residue protein sequence, read N- to C-terminus: UDP-N-acetylglucosamine 1-carboxyvinyltransferase (418 aa).

Phosphoenolpyruvate is bound at residue 22 to 23 (KN). Position 91 (Arg-91) interacts with UDP-N-acetyl-alpha-D-glucosamine. The Proton donor role is filled by Cys-115. Cys-115 carries the 2-(S-cysteinyl)pyruvic acid O-phosphothioketal modification. Residues 120 to 124 (RPVDL), Asp-305, and Ile-327 each bind UDP-N-acetyl-alpha-D-glucosamine.

The protein belongs to the EPSP synthase family. MurA subfamily.

It is found in the cytoplasm. The catalysed reaction is phosphoenolpyruvate + UDP-N-acetyl-alpha-D-glucosamine = UDP-N-acetyl-3-O-(1-carboxyvinyl)-alpha-D-glucosamine + phosphate. Its pathway is cell wall biogenesis; peptidoglycan biosynthesis. In terms of biological role, cell wall formation. Adds enolpyruvyl to UDP-N-acetylglucosamine. The sequence is that of UDP-N-acetylglucosamine 1-carboxyvinyltransferase from Wigglesworthia glossinidia brevipalpis.